The sequence spans 512 residues: 2,3-bisphosphoglycerate-independent phosphoglycerate mutase (512 aa).

Mn(2+)-binding residues include Asp-18 and Ser-68. Ser-68 acts as the Phosphoserine intermediate in catalysis. Residues His-129, 159-160 (RD), Arg-191, Arg-197, 265-268 (RPDR), and Lys-338 each bind substrate. 5 residues coordinate Mn(2+): Asp-403, His-407, Asp-444, His-445, and His-462.

Belongs to the BPG-independent phosphoglycerate mutase family. Monomer. Mn(2+) is required as a cofactor.

It carries out the reaction (2R)-2-phosphoglycerate = (2R)-3-phosphoglycerate. The protein operates within carbohydrate degradation; glycolysis; pyruvate from D-glyceraldehyde 3-phosphate: step 3/5. Functionally, catalyzes the interconversion of 2-phosphoglycerate and 3-phosphoglycerate. This chain is 2,3-bisphosphoglycerate-independent phosphoglycerate mutase, found in Mesomycoplasma hyopneumoniae (strain 232) (Mycoplasma hyopneumoniae).